A 357-amino-acid polypeptide reads, in one-letter code: D(4) dopamine receptor (357 aa).

Residues 1 to 32 (MGNRSAADADGLLAGRGPGTGGGAGSPGAAAA) lie on the Extracellular side of the membrane. Asn3 is a glycosylation site (N-linked (GlcNAc...) asparagine). A helical membrane pass occupies residues 33–55 (LVGGVLLIGAVLAGNALVCVSVA). The Cytoplasmic segment spans residues 56–65 (AERALQTPTN). A helical membrane pass occupies residues 66 to 88 (YFIVSLAAADLLLALLVLPLFVY). Residue Asp75 participates in Na(+) binding. Residues 89-104 (SEVQGGVWQFSPGLCD) lie on the Extracellular side of the membrane. The cysteines at positions 103 and 180 are disulfide-linked. Residues 105–126 (ALMAMDVMLCTASIFNLCAISA) form a helical membrane-spanning segment. Ser117 lines the Na(+) pocket. Topologically, residues 127-146 (DRFVAVAVPLSYNRQSGGGR) are cytoplasmic. A helical membrane pass occupies residues 147–170 (QLLLIGATWLLSAAVAAPVLCGLN). At 171–186 (DARGRDPAVCRLEDRD) the chain is on the extracellular side. A helical transmembrane segment spans residues 187-208 (YVVYSSVCSFFLPCPVMLLLYW). Topologically, residues 209–284 (ATFRGLRRWE…ITGRERKAMR (76 aa)) are cytoplasmic. The interval 225-261 (LHGRRPRRPSGPGPPPPEAVETPEAPEAIPTPDATLA) is disordered. Residues 233-242 (PSGPGPPPPE) are compositionally biased toward pro residues. A compositionally biased stretch (low complexity) spans 243-259 (AVETPEAPEAIPTPDAT). A helical transmembrane segment spans residues 285 to 307 (VLPVVVGAFLVCWTPFFVVHITG). The Extracellular portion of the chain corresponds to 308-316 (ALCPACAVP). A disulfide bond links Cys310 and Cys313. A helical transmembrane segment spans residues 317–339 (PRLVSAVTWLGYVNSALNPLIYT). Over 340–357 (VFNAEFRAVFRKALRLCC) the chain is Cytoplasmic. Cys357 carries the S-palmitoyl cysteine lipid modification.

Belongs to the G-protein coupled receptor 1 family. Forms homo- and heterooligomers with DRD2. D4.7 allele exhibits higher affinity for homodimers compared to DRD2 heterodimers, while alleles D42. and 4.4 have similar affinities for both. The interaction with DRD2 may modulate agonist-induced downstream signaling. Interacts with CLIC6. Interacts with GPRASP1. May interact with ADORA2A. Interacts with KLHL12. Polyubiquitinated by the BCR(KLHL12) E3 ubiquitin ligase complex: polyubiquitination does not lead to degradation of DRD4 protein. Post-translationally, palmitoylated. Palmitoylation of the C-terminal Cys is important for normal expression at the cell membrane.

The protein localises to the cell membrane. Its function is as follows. Dopamine receptor responsible for neuronal signaling in the mesolimbic system of the brain, an area of the brain that regulates emotion and complex behavior. Activated by dopamine, but also by epinephrine and norepinephrine, and by numerous synthetic agonists and drugs. Agonist binding triggers signaling via G proteins that inhibit adenylyl cyclase. Modulates the circadian rhythm of contrast sensitivity by regulating the rhythmic expression of NPAS2 in the retinal ganglion cells. This is D(4) dopamine receptor (DRD4) from Mustela putorius furo (European domestic ferret).